The primary structure comprises 337 residues: MPVKAGINGFGRIGRIVLRNALLHGDIDVVAVNDPFIDLEYMVYMFKYDSVHGRFKGSVEAKDGKLYVEGKPIHVFAEKDPANIPWGSVGAEYIVESTGVFTTTEKASAHLKGVCKKVIISAPSADAPMFVCGVNLDAYDSKYKVISNASCTTNCLAPLAKVIHDKFGIVQGLMTSVHATTATQKTVDGPSNKDWLGGRSVGNNIIPSSTGAAKAVGKVIPSLNGKLNGLAFRVPTVDVSVVDLVVRLEKPASYDEIKQAIKEASETTHKGILGYTEEKVVSTDFTGNDNSSIFDRDAGIALNKTFVKLISWYDNEWGYSRRCCDLLGYAAKVDGAL.

Residues 12 to 13 (RI), aspartate 34, and lysine 79 contribute to the NAD(+) site. D-glyceraldehyde 3-phosphate-binding positions include 150–152 (SCT), threonine 181, 210–211 (TG), and arginine 233. Cysteine 151 functions as the Nucleophile in the catalytic mechanism. NAD(+) is bound at residue asparagine 315.

It belongs to the glyceraldehyde-3-phosphate dehydrogenase family. Homotetramer.

It is found in the cytoplasm. It carries out the reaction D-glyceraldehyde 3-phosphate + phosphate + NAD(+) = (2R)-3-phospho-glyceroyl phosphate + NADH + H(+). It participates in carbohydrate degradation; glycolysis; pyruvate from D-glyceraldehyde 3-phosphate: step 1/5. This chain is Glyceraldehyde-3-phosphate dehydrogenase (GPD), found in Phanerodontia chrysosporium (White-rot fungus).